Consider the following 546-residue polypeptide: Chaperonin GroEL (546 aa).

ATP is bound by residues 30–33, K51, 87–91, G415, and D495; these read TLGP and DGTTT.

Belongs to the chaperonin (HSP60) family. In terms of assembly, forms a cylinder of 14 subunits composed of two heptameric rings stacked back-to-back. Interacts with the co-chaperonin GroES.

Its subcellular location is the cytoplasm. The catalysed reaction is ATP + H2O + a folded polypeptide = ADP + phosphate + an unfolded polypeptide.. Functionally, together with its co-chaperonin GroES, plays an essential role in assisting protein folding. The GroEL-GroES system forms a nano-cage that allows encapsulation of the non-native substrate proteins and provides a physical environment optimized to promote and accelerate protein folding. This chain is Chaperonin GroEL, found in Brucella ovis (strain ATCC 25840 / 63/290 / NCTC 10512).